The sequence spans 940 residues: UvrABC system protein A (940 aa).

31-38 (GLSGSGKS) is an ATP binding site. Residues 253–280 (CPICGYSMRELEPRLFSFNNPAGACPTC) form a C4-type zinc finger. ABC transporter domains are found at residues 310-587 (WDRR…PESL) and 607-937 (ANPE…RFLK). An ATP-binding site is contributed by 640 to 647 (GVSGSGKS). The C4-type zinc-finger motif lies at 740 to 766 (CEACQGDGVIKVEMHFLPDIYVPCDQC).

It belongs to the ABC transporter superfamily. UvrA family. As to quaternary structure, forms a heterotetramer with UvrB during the search for lesions.

The protein localises to the cytoplasm. The UvrABC repair system catalyzes the recognition and processing of DNA lesions. UvrA is an ATPase and a DNA-binding protein. A damage recognition complex composed of 2 UvrA and 2 UvrB subunits scans DNA for abnormalities. When the presence of a lesion has been verified by UvrB, the UvrA molecules dissociate. Functionally, plays a role in recovery after DNA ADP-ribosylation. This is UvrABC system protein A from Escherichia coli O127:H6 (strain E2348/69 / EPEC).